We begin with the raw amino-acid sequence, 199 residues long: METIVLGVEPRVIKKKNAEKLRKNGIVPGVIYHKGEETIAISVNELALRKLVHSAESHIIDLQFPDGKIKRSFIKDVQFHPVTDRIIHTDFQLFSAEEIIELEVPVAVSGESAGVEKGGKLLIILHALTIKGKPEDMPDHLVVDVTALEIGHSIHVKEIPLDAYTGLQIMDDPDTPVITVLASKKEAEATPEAAVATAS.

The protein belongs to the bacterial ribosomal protein bL25 family. CTC subfamily. Part of the 50S ribosomal subunit; part of the 5S rRNA/L5/L18/L25 subcomplex. Contacts the 5S rRNA. Binds to the 5S rRNA independently of L5 and L18.

Functionally, this is one of the proteins that binds to the 5S RNA in the ribosome where it forms part of the central protuberance. The polypeptide is Large ribosomal subunit protein bL25 (Pelodictyon phaeoclathratiforme (strain DSM 5477 / BU-1)).